Consider the following 789-residue polypeptide: Isoamylase SU1, chloroplastic (789 aa).

The N-terminal 44 residues, 1-44 (MAQQLPCVSSPRPLLAVPAGRWRAGVRGRPNVAGLGRGRLSLHA), are a transit peptide targeting the chloroplast. Catalysis depends on Asp-417, which acts as the Nucleophile. The Proton donor role is filled by Glu-473.

This sequence belongs to the glycosyl hydrolase 13 family.

The protein resides in the plastid. Its subcellular location is the chloroplast. The catalysed reaction is Hydrolysis of (1-&gt;6)-alpha-D-glucosidic branch linkages in glycogen, amylopectin and their beta-limit dextrins.. It participates in glycan biosynthesis; starch biosynthesis. Isoamylase starch-debranching enzyme involved in amylopectin biosynthesis in endosperm. Functions by removing excess branches or improper branches that interfere with the formation of double helices of the cluster chains of amylopectin and crystallization of starch. This is Isoamylase SU1, chloroplastic from Zea mays (Maize).